Reading from the N-terminus, the 219-residue chain is Transmembrane emp24 domain-containing protein 10 (219 aa).

Positions 1-31 (MSGWSGPLARRGPGPLALLFLFLLGPSSVLA) are cleaved as a signal peptide. Positions 1–142 (MSGWSGPLAR…KNYEEIAKVE (142 aa)) are required for interaction with STX17. The Lumenal portion of the chain corresponds to 32–185 (ISFHLPVNSR…RDTNESTNTR (154 aa)). The GOLD domain maps to 41–193 (RKCLREEIHK…TRVLYFSIFS (153 aa)). Positions 147 to 178 (LEVELRRLEDLSESIVNDFAYMKKREEEMRDT) are required for TMED10 and TMED2 cis-Golgi network localization. Dimethylated arginine is present on residues Arg-171 and Arg-176. Residue Asn-179 is glycosylated (N-linked (GlcNAc...) asparagine). Residues 186–206 (VLYFSIFSMFCLIGLATWQVF) form a helical membrane-spanning segment. The tract at residues 204 to 219 (QVFYLRRFFKAKKLIE) is interaction with COPG1. The Cytoplasmic segment spans residues 207–219 (YLRRFFKAKKLIE). Residues 207–219 (YLRRFFKAKKLIE) form an interaction with ARF1 and IL1B region. Residues 211–212 (FF) carry the COPII vesicle coat-binding motif. Positions 211-219 (FFKAKKLIE) match the COPI vesicle coat-binding motif.

The protein belongs to the EMP24/GP25L family. Predominantly dimeric and to a lesser extent monomeric in the ER. Monomer and dimer in ERGIC and cis-Golgi network. Forms homooligomer (via GOLD domain); the assembly is promoted by direct binding with leaderless cargos and may form a protein channel that facilitates cargo entry into the ERGIC. Forms heterooligomeric complexes with other members of the p24 family such as TMED2, TMED7 and TMED9. Interacts (via GOLD domain) with TMED2 (via GOLD domain); the complex is required for export of TMED10 from the ER to the cis-Golgi network; the complex is proposed to be involved in cis-Golgi network dynamics and / or biogenesis. Associates with the COPI vesicle coat subunits (coatomer). Tetramerization of the cytoplasmic domain at the Golgi membrane in vitro; the complex is proposed to interact with COPI coatomer and induce budding of the vesicles. Interacts with COPG1; the interaction involves TMED10 homodimer. Interacts with ARF1 (GDP-bound); the interaction probably involves a TMED10 oligomer. Interacts with SEC23A, SEC24B, SEC24C and SEC24D components of the coat protein complex II/COPII, indicative of an association of TMED10 with the COPII vesicle coat. Interacts with CD59. Interacts with MPPE1/PGAP5; the complex might recruit and sort GPI-anchored proteins to the ER-exit site, or the interaction might lead to recycling of PGAP5 between the ER and the Golgi. Interacts with F2LR1/PAR2. Interacts with KDELR2/ERD2; the interaction is disrupted by KDELR2 ligand. Found in a complex composed at least of SURF4, TMED2 and TMED10. Associates with the presenilin-dependent gamma-secretase complex. Interacts with STX17; the interaction is direct. Interacts with IL-1; the interaction is direct. Interacts with RAB21 (active GTP-bound form); the interaction is indirect and regulates TMED10 abundance and localization at the Golgi.

It is found in the endoplasmic reticulum membrane. The protein localises to the endoplasmic reticulum-Golgi intermediate compartment membrane. Its subcellular location is the golgi apparatus membrane. It localises to the golgi apparatus. The protein resides in the cis-Golgi network membrane. It is found in the trans-Golgi network membrane. The protein localises to the cytoplasmic vesicle. Its subcellular location is the secretory vesicle membrane. It localises to the cell membrane. The protein resides in the melanosome. In terms of biological role, cargo receptor involved in protein vesicular trafficking and quality control in the endoplasmic reticulum (ER) and Golgi. The p24 protein family is a group of transmembrane proteins that bind coat protein complex I/COPI and coat protein complex II/COPII involved in vesicular trafficking between the membranes. Acts at the lumenal side for incorporation of secretory cargo molecules into transport vesicles and involved in vesicle coat formation at the cytoplasmic side. Mainly functions in the early secretory pathway and cycles between the ER, ER-Golgi intermediate compartment (ERGIC) and Golgi, mediating cargo transport through COPI and COPII-coated vesicles. In COPII vesicle-mediated anterograde transport, involved in the transport of GPI-anchored proteins by acting together with TMED2 as their cargo receptor; the function specifically implies SEC24C and SEC24D of the COPII vesicle coat and lipid raft-like microdomains of the ER. Recognizes GPI anchors structural remodeled in the ER by the GPI inositol-deacylase/PGAP1 and the metallophosphoesterase MPPE1/PGAP5. In COPI vesicle-mediated retrograde transport, involved in the biogenesis of COPI vesicles and vesicle coat recruitment. Involved in trafficking of amyloid beta A4 protein and soluble APP-beta release (independent from the modulation of gamma-secretase activity). Involved in the KDELR2-mediated retrograde transport of the toxin A subunit (CTX-A-K63)together with COPI and the COOH terminus of KDELR2. On Golgi membranes, acts as a primary receptor for ARF1-GDP, a GTP-binding protein involved in COPI-vesicle formation. Increases coatomer-dependent GTPase-activating activity of ARFGAP2 which mediates the hydrolysis of ARF1-bound GTP and therefore modulates protein trafficking from the Golgi apparatus. Involved in the exocytic trafficking of G protein-coupled receptors F2LR1/PAR2 (trypsin and tryspin-like enzyme receptor), OPRM1 (opioid receptor) and P2RY4 (UTD and UDP receptor) from the Golgi to the plasma membrane, thus contributing to receptor resensitization. In addition to its cargo receptor activity, may also act as a protein channel after oligomerization, facilitating the post-translational entry of leaderless cytoplasmic cargo into the ERGIC. Involved in the translocation into ERGIC, the vesicle entry and the secretion of leaderless cargos (lacking the secretion signal sequence), including the mature form of interleukin 1/IL-1 family members, the alpha-crystallin B chain HSPB5, the carbohydrate-binding proteins galectin-1/LGALS1 and galectin-3/LGALS3, the microtubule-associated protein Tau/MAPT, and the annexin A1/ANXA1; the translocation process is dependent on cargo protein unfolding and enhanced by chaperones HSP90AB1 and HSP90B1/GRP9. Could also associates with the presenilin-dependent gamma-secretase complex in order to regulate gamma-cleavages of the amyloid beta A4 protein to yield amyloid-beta 40/Abeta40. In Oryctolagus cuniculus (Rabbit), this protein is Transmembrane emp24 domain-containing protein 10 (TMED10).